The primary structure comprises 294 residues: HTH-type transcriptional regulator XapR (294 aa).

Positions 7 to 64 (TDLKLLRYFLAVAEELHFGRAAARLNMSQPPLSIHIKELENQLGTQLFIRHSRSVVLT) constitute an HTH lysR-type domain. Residues 24-43 (FGRAAARLNMSQPPLSIHIK) constitute a DNA-binding region (H-T-H motif).

It belongs to the LysR transcriptional regulatory family.

In terms of biological role, positive regulator required for the expression of xapA and xapB. Binds to the inducer xanthosine. The polypeptide is HTH-type transcriptional regulator XapR (xapR) (Escherichia coli (strain K12)).